Reading from the N-terminus, the 207-residue chain is MTDILASTEQPPLVRSDMNLVWLDMEMTGLEPDSDRIIEIAVVVTNSTLDRMVEGPVLAIHQSDETLAGMDQWNQNTHGRSGLIDRVKASTVSEADATEQIRDFLSVYVPPGKSPMCGNSICQDRRFMARWMPELERFFHYRNLDVSTLKELCRRWQPAIYKGFQKRAMHTALADIHESIDELKYYREHFLIPSAPDAANGAEKAAE.

Residues 20 to 183 (LVWLDMEMTG…ADIHESIDEL (164 aa)) enclose the Exonuclease domain. Y141 is a catalytic residue.

This sequence belongs to the oligoribonuclease family.

It localises to the cytoplasm. Functionally, 3'-to-5' exoribonuclease specific for small oligoribonucleotides. This is Oligoribonuclease from Paraburkholderia xenovorans (strain LB400).